A 162-amino-acid chain; its full sequence is Ribonuclease H (162 aa).

The RNase H type-1 domain occupies 6–154 (DMKRVEIFTD…ADRLANQGVE (149 aa)). Asp15, Glu53, Asp82, and Asp146 together coordinate Mg(2+).

The protein belongs to the RNase H family. Monomer. Mg(2+) serves as cofactor.

Its subcellular location is the cytoplasm. It carries out the reaction Endonucleolytic cleavage to 5'-phosphomonoester.. Endonuclease that specifically degrades the RNA of RNA-DNA hybrids. In Nitrosomonas eutropha (strain DSM 101675 / C91 / Nm57), this protein is Ribonuclease H.